Consider the following 181-residue polypeptide: Acireductone dioxygenase (181 aa).

Positions 98, 100, 104, and 142 each coordinate Fe(2+). Ni(2+) contacts are provided by histidine 98, histidine 100, glutamate 104, and histidine 142.

This sequence belongs to the acireductone dioxygenase (ARD) family. As to quaternary structure, monomer. Fe(2+) is required as a cofactor. The cofactor is Ni(2+).

The enzyme catalyses 1,2-dihydroxy-5-(methylsulfanyl)pent-1-en-3-one + O2 = 3-(methylsulfanyl)propanoate + CO + formate + 2 H(+). It carries out the reaction 1,2-dihydroxy-5-(methylsulfanyl)pent-1-en-3-one + O2 = 4-methylsulfanyl-2-oxobutanoate + formate + 2 H(+). The protein operates within amino-acid biosynthesis; L-methionine biosynthesis via salvage pathway; L-methionine from S-methyl-5-thio-alpha-D-ribose 1-phosphate: step 5/6. Catalyzes 2 different reactions between oxygen and the acireductone 1,2-dihydroxy-3-keto-5-methylthiopentene (DHK-MTPene) depending upon the metal bound in the active site. Fe-containing acireductone dioxygenase (Fe-ARD) produces formate and 2-keto-4-methylthiobutyrate (KMTB), the alpha-ketoacid precursor of methionine in the methionine recycle pathway. Ni-containing acireductone dioxygenase (Ni-ARD) produces methylthiopropionate, carbon monoxide and formate, and does not lie on the methionine recycle pathway. The sequence is that of Acireductone dioxygenase from Alcanivorax borkumensis (strain ATCC 700651 / DSM 11573 / NCIMB 13689 / SK2).